A 401-amino-acid polypeptide reads, in one-letter code: Probable tRNA sulfurtransferase (401 aa).

The 106-residue stretch at 60–165 (EPISEQLKGV…EQATYITFKD (106 aa)) folds into the THUMP domain. ATP-binding positions include 183–184 (ML), 208–209 (HF), Arg-265, Gly-287, and Gln-296.

Belongs to the ThiI family.

It is found in the cytoplasm. The enzyme catalyses [ThiI sulfur-carrier protein]-S-sulfanyl-L-cysteine + a uridine in tRNA + 2 reduced [2Fe-2S]-[ferredoxin] + ATP + H(+) = [ThiI sulfur-carrier protein]-L-cysteine + a 4-thiouridine in tRNA + 2 oxidized [2Fe-2S]-[ferredoxin] + AMP + diphosphate. It catalyses the reaction [ThiS sulfur-carrier protein]-C-terminal Gly-Gly-AMP + S-sulfanyl-L-cysteinyl-[cysteine desulfurase] + AH2 = [ThiS sulfur-carrier protein]-C-terminal-Gly-aminoethanethioate + L-cysteinyl-[cysteine desulfurase] + A + AMP + 2 H(+). Its pathway is cofactor biosynthesis; thiamine diphosphate biosynthesis. Functionally, catalyzes the ATP-dependent transfer of a sulfur to tRNA to produce 4-thiouridine in position 8 of tRNAs, which functions as a near-UV photosensor. Also catalyzes the transfer of sulfur to the sulfur carrier protein ThiS, forming ThiS-thiocarboxylate. This is a step in the synthesis of thiazole, in the thiamine biosynthesis pathway. The sulfur is donated as persulfide by IscS. This is Probable tRNA sulfurtransferase from Bacillus pumilus (strain SAFR-032).